We begin with the raw amino-acid sequence, 565 residues long: Formate--tetrahydrofolate ligase (565 aa).

An ATP-binding site is contributed by 65-72 (TPAGEGKT).

It belongs to the formate--tetrahydrofolate ligase family.

The enzyme catalyses (6S)-5,6,7,8-tetrahydrofolate + formate + ATP = (6R)-10-formyltetrahydrofolate + ADP + phosphate. Its pathway is one-carbon metabolism; tetrahydrofolate interconversion. The chain is Formate--tetrahydrofolate ligase from Syntrophus aciditrophicus (strain SB).